The primary structure comprises 213 residues: MFENINEDRGQVGIGTLIVFIAMVLVAAIAAGVLVNTAGFLQATAEDAGQQSVNKVTNRVDVVNAHGLVNKTGEERTVDQIFLTVRLAAGSGSVSLEDTTVKYLSETTARTLTYNDTVTGSDTADPANLTTGNNFTAGVLEDGDDSFEVLNEQSDRAEMVINTSTVEGDNTNGTATGQTVKLDITSRNGGTAQVILTMPQQLAGKDNNDPIAL.

Positions 1-10 are excised as a propeptide; it reads MFENINEDRG. N-linked (GlcNAc...) asparagine glycans are attached at residues asparagine 70, asparagine 115, and asparagine 172.

It belongs to the archaeal flagellin family. In terms of processing, glycosylated by a pentasaccharide similar to the S-layer glycoprotein, probably comprising a hexose, 2 hexuronic acids, a methyl ester of a hexuronic acid and mannose. Glycosylation is required for biosynthesis of stable flagella.

It is found in the archaeal flagellum. Its function is as follows. Major flagellin required for motility. Not involved in PibD-dependent surface adhesion. Much more abundant in cells compared to FlgA2. This is Flagellin A1 (flgA1) from Haloferax volcanii (strain ATCC 29605 / DSM 3757 / JCM 8879 / NBRC 14742 / NCIMB 2012 / VKM B-1768 / DS2) (Halobacterium volcanii).